The chain runs to 229 residues: Transmembrane emp24 domain-containing protein 5 (229 aa).

The signal sequence occupies residues 1–27 (MGVRMWLPFPMLLLSALPATLLSGAAG). At 28 to 196 (FTPSLDSDFT…IQESNFDRVN (169 aa)) the chain is on the lumenal side. Residues 45–126 (KECFYQPMPL…EKVIFFELIL (82 aa)) enclose the GOLD domain. A helical transmembrane segment spans residues 197–217 (FWSVVNLMVMVVVSAIQVYTL). Residues 218-229 (KSLFEDKRKSRT) lie on the Cytoplasmic side of the membrane.

This sequence belongs to the EMP24/GP25L family. Interacts with TMED9 and TMED10.

The protein resides in the endoplasmic reticulum membrane. It localises to the golgi apparatus. The protein localises to the cis-Golgi network membrane. It is found in the endoplasmic reticulum-Golgi intermediate compartment membrane. Functionally, potential role in vesicular protein trafficking, mainly in the early secretory pathway. Required for the maintenance of the Golgi apparatus; involved in protein exchange between Golgi stacks during assembly. Probably not required for COPI-vesicle-mediated retrograde transport. The sequence is that of Transmembrane emp24 domain-containing protein 5 (Tmed5) from Rattus norvegicus (Rat).